We begin with the raw amino-acid sequence, 205 residues long: Holliday junction branch migration complex subunit RuvA (205 aa).

Positions 1–64 (MIGRLRGTLA…EDAHLLYGFH (64 aa)) are domain I. The segment at 65 to 143 (EKRERELFRE…AWETSPAMFT (79 aa)) is domain II. The segment at 144 to 153 (LVSDGPVPVS) is flexible linker. Residues 154 to 205 (GASTAEADAVSALVSLGYKPQEASKAVSAIKDKAGLSSEELIRRSLKGMITK) form a domain III region.

Belongs to the RuvA family. As to quaternary structure, homotetramer. Forms an RuvA(8)-RuvB(12)-Holliday junction (HJ) complex. HJ DNA is sandwiched between 2 RuvA tetramers; dsDNA enters through RuvA and exits via RuvB. An RuvB hexamer assembles on each DNA strand where it exits the tetramer. Each RuvB hexamer is contacted by two RuvA subunits (via domain III) on 2 adjacent RuvB subunits; this complex drives branch migration. In the full resolvosome a probable DNA-RuvA(4)-RuvB(12)-RuvC(2) complex forms which resolves the HJ.

Its subcellular location is the cytoplasm. Its function is as follows. The RuvA-RuvB-RuvC complex processes Holliday junction (HJ) DNA during genetic recombination and DNA repair, while the RuvA-RuvB complex plays an important role in the rescue of blocked DNA replication forks via replication fork reversal (RFR). RuvA specifically binds to HJ cruciform DNA, conferring on it an open structure. The RuvB hexamer acts as an ATP-dependent pump, pulling dsDNA into and through the RuvAB complex. HJ branch migration allows RuvC to scan DNA until it finds its consensus sequence, where it cleaves and resolves the cruciform DNA. The sequence is that of Holliday junction branch migration complex subunit RuvA from Pseudomonas putida (strain W619).